Reading from the N-terminus, the 249-residue chain is Flavin-dependent thymidylate synthase (249 aa).

A ThyX domain is found at 7 to 235 (LDVQLIAATA…PVLFDDFHIT (229 aa)). Residues 94 to 97 (ELVR), 105 to 109 (QLSQR), and Arg-174 contribute to the dUMP site. Residues 97-99 (RHR) and Gln-105 contribute to the FAD site. A ThyX motif motif is present at residues 97–107 (RHRHFSFSQLS). Residues 190 to 192 (NYR) and His-196 contribute to the FAD site. A dUMP-binding site is contributed by Arg-201. Residue Arg-201 is the Involved in ionization of N3 of dUMP, leading to its activation of the active site.

Belongs to the thymidylate synthase ThyX family. In terms of assembly, homotetramer. Requires FAD as cofactor.

The catalysed reaction is dUMP + (6R)-5,10-methylene-5,6,7,8-tetrahydrofolate + NADPH + H(+) = dTMP + (6S)-5,6,7,8-tetrahydrofolate + NADP(+). The protein operates within pyrimidine metabolism; dTTP biosynthesis. Its function is as follows. Catalyzes the reductive methylation of 2'-deoxyuridine-5'-monophosphate (dUMP) to 2'-deoxythymidine-5'-monophosphate (dTMP) while utilizing 5,10-methylenetetrahydrofolate (mTHF) as the methyl donor, and NADPH and FADH(2) as the reductant. The chain is Flavin-dependent thymidylate synthase from Corynebacterium aurimucosum (strain ATCC 700975 / DSM 44827 / CIP 107346 / CN-1) (Corynebacterium nigricans).